Consider the following 367-residue polypeptide: Peptide chain release factor 2 (367 aa).

Gln-250 is subject to N5-methylglutamine.

It belongs to the prokaryotic/mitochondrial release factor family. Post-translationally, methylated by PrmC. Methylation increases the termination efficiency of RF2.

The protein resides in the cytoplasm. Its function is as follows. Peptide chain release factor 2 directs the termination of translation in response to the peptide chain termination codons UGA and UAA. The polypeptide is Peptide chain release factor 2 (Kineococcus radiotolerans (strain ATCC BAA-149 / DSM 14245 / SRS30216)).